Reading from the N-terminus, the 129-residue chain is Protein Turandot A (129 aa).

A signal peptide spans 1–21 (MNSLTGFMCCALLLISPLCMG). N-linked (GlcNAc...) asparagine glycosylation occurs at Asn-49.

Belongs to the Turandot family.

It localises to the secreted. Its function is as follows. A humoral factor that plays a role in stress tolerance; gives increased resistance to the lethal effects of bacterial challenge and stress. Regulated by the JAK/STAT pathway and NF-KB-like Relish pathway in the fat body, upd3 in the hemocytes and Mekk1 in response to septic injury and consequent immune response. This is Protein Turandot A (TotA) from Drosophila yakuba (Fruit fly).